Consider the following 172-residue polypeptide: NAD(P)H-quinone oxidoreductase subunit I, chloroplastic (172 aa).

4Fe-4S ferredoxin-type domains follow at residues 55-84 (GRIHFEFDKCIACEVCVRVCPIDLPVVDWK) and 95-124 (LNYSIDFGICIFCGNCVEYCPTNCLSMTEE). Positions 64, 67, 70, 74, 104, 107, 110, and 114 each coordinate [4Fe-4S] cluster.

The protein belongs to the complex I 23 kDa subunit family. NDH is composed of at least 16 different subunits, 5 of which are encoded in the nucleus. It depends on [4Fe-4S] cluster as a cofactor.

It is found in the plastid. It localises to the chloroplast thylakoid membrane. It carries out the reaction a plastoquinone + NADH + (n+1) H(+)(in) = a plastoquinol + NAD(+) + n H(+)(out). The enzyme catalyses a plastoquinone + NADPH + (n+1) H(+)(in) = a plastoquinol + NADP(+) + n H(+)(out). Its function is as follows. NDH shuttles electrons from NAD(P)H:plastoquinone, via FMN and iron-sulfur (Fe-S) centers, to quinones in the photosynthetic chain and possibly in a chloroplast respiratory chain. The immediate electron acceptor for the enzyme in this species is believed to be plastoquinone. Couples the redox reaction to proton translocation, and thus conserves the redox energy in a proton gradient. This Crucihimalaya wallichii (Rock-cress) protein is NAD(P)H-quinone oxidoreductase subunit I, chloroplastic.